The primary structure comprises 194 residues: 3-isopropylmalate dehydratase small subunit (194 aa).

This sequence belongs to the LeuD family. LeuD type 1 subfamily. In terms of assembly, heterodimer of LeuC and LeuD.

The catalysed reaction is (2R,3S)-3-isopropylmalate = (2S)-2-isopropylmalate. The protein operates within amino-acid biosynthesis; L-leucine biosynthesis; L-leucine from 3-methyl-2-oxobutanoate: step 2/4. Catalyzes the isomerization between 2-isopropylmalate and 3-isopropylmalate, via the formation of 2-isopropylmaleate. The chain is 3-isopropylmalate dehydratase small subunit from Halalkalibacterium halodurans (strain ATCC BAA-125 / DSM 18197 / FERM 7344 / JCM 9153 / C-125) (Bacillus halodurans).